Here is a 776-residue protein sequence, read N- to C-terminus: Protein FAM83C (776 aa).

The tract at residues 1 to 340 (MQGCQAGASI…LYAESQPVEG (340 aa)) is DUF1669. Disordered stretches follow at residues 344–467 (NEDP…STSP), 494–565 (SRLP…SLQH), 617–653 (HGQLDLLPQNPKPQAPKIPSDAYSSAGPSKPSLDDRR), 669–694 (PFRSEGPGPSCPPEPSPVRMAGVGSA), and 716–745 (QGARQKPEPGIPGAPVSGHQNGSSNDLFAP). Residues 368 to 385 (SATGSSPSSNSLSSIKHS) show a composition bias toward low complexity. Residues 452 to 467 (PWSQSSPALNHSSTSP) show a composition bias toward polar residues. Basic and acidic residues predominate over residues 523-539 (VEEKKVSLSQSHDHLDR). Over residues 554 to 563 (SRVTPDSSSL) the composition is skewed to polar residues.

This sequence belongs to the FAM83 family. In terms of assembly, directly interacts (via DUF1669) with CSNK1A1 and CSNK1A1L. May interact with RAF1. In terms of processing, phosphorylated by CSNK1A1.

It localises to the cytoplasm. Functionally, may play a role in MAPK signaling. In Mus musculus (Mouse), this protein is Protein FAM83C.